The primary structure comprises 463 residues: MVASKIAWKFILPNCFKAKNDRNILPSETKIIQICKQINSDHHHSRLAISDISTDSRSVFISLDDLSSNAIIGSNLHIFTYAELKIITSKFSSANFLGKGGFGPVHKGFIDDKIKPGLKAQPVAVKLLDLDGNQGHQEWLTEVVFLGQLRHPHLVKLIGYCWEEEQRLLVYEYMARGNLENHLFSRYSSCLPWSTRIKIAVGAAKGLAFLHGEEKPVIYRDFKASNILLDSDYKAKLSDFGLAKDGPEGDDTHVSTRVMGTHGYAAPEYIMTGHLTSKSDVYSFGVVLLELITGRPAMDKNRPIRERNLVDWARPMLRDFHKLDRIMDPRLEGQYSTEGAKKVAALAYQCLSHQPRSRPTMSNVVKSLEPISELTDIPIGPFVYVVPSSECDKELEIGALKSKLDEEKKMNVNEDEQKGARRHGHRHKHRPKSSAAAAAVYSDTHMQNFALSHERTNKKHILK.

Residues 91 to 383 (FSSANFLGKG…LTDIPIGPFV (293 aa)) form the Protein kinase domain. ATP is bound by residues 97-105 (LGKGGFGPV) and K126. Phosphotyrosine is present on residues Y171 and Y173. The active-site Proton acceptor is D221.

It belongs to the protein kinase superfamily. Ser/Thr protein kinase family. Interacts with the V.dahliae elicitor EPD1 (AC G2WWH6). Phosphorylated at Tyr-171 and Tyr-173 in the presence of pathogen-associated molecular patterns (PAMPs); this triggers the expression of pathogenesis-related genes.

Its subcellular location is the cell membrane. The enzyme catalyses L-seryl-[protein] + ATP = O-phospho-L-seryl-[protein] + ADP + H(+). It carries out the reaction L-threonyl-[protein] + ATP = O-phospho-L-threonyl-[protein] + ADP + H(+). Functionally, required for pathogen-associated molecular pattern (PAMP, e.g. chitin and flg22)-triggered immunity (PTI) involving reactive oxygen species (ROS) accumulation and triggering plant defense, including defense-related gene expression (e.g. PR1 and LOX). Ensures specific recognition of the EPD1 effector of Verticillium dahliae, resulting in a hypersensitive response known as effector-triggered immunity (ETI), characterized by the activation of programmed cell death to limit infection by the pathogen. Priming plants with the incompatible pathogen V.dahliae leads to an increased resistance to both the broad-host-range filamentous pathogen Botrytis cinerea and the semibiotrophic pathogen Phytophthora capsici, as a result of systemic acquired resistance (SAR). The polypeptide is EPD1-interacting receptor-like cytoplasmic serine/threonine-protein kinase (Nicotiana benthamiana).